A 345-amino-acid chain; its full sequence is Ferrochelatase (345 aa).

His215 and Glu296 together coordinate Fe cation.

The protein belongs to the ferrochelatase family.

It localises to the cytoplasm. The catalysed reaction is heme b + 2 H(+) = protoporphyrin IX + Fe(2+). It participates in porphyrin-containing compound metabolism; protoheme biosynthesis; protoheme from protoporphyrin-IX: step 1/1. Catalyzes the ferrous insertion into protoporphyrin IX. This is Ferrochelatase from Rhodopseudomonas palustris (strain TIE-1).